Here is an 85-residue protein sequence, read N- to C-terminus: Large ribosomal subunit protein bL27 (85 aa).

The interval 1–20 is disordered; the sequence is MAHKKAGGSTRNGRDSESKR.

This sequence belongs to the bacterial ribosomal protein bL27 family.

This chain is Large ribosomal subunit protein bL27, found in Yersinia enterocolitica serotype O:8 / biotype 1B (strain NCTC 13174 / 8081).